A 52-amino-acid polypeptide reads, in one-letter code: MWRIWKVFDPRRILIATAIWLIIIALTIHVILMTTERFNWLEGAPAAEYYSS.

Topologically, residues 1 to 12 are cytoplasmic; it reads MWRIWKVFDPRR. Residues 13–33 traverse the membrane as a helical segment; it reads ILIATAIWLIIIALTIHVILM. An a bacteriochlorophyll-binding site is contributed by His29. The Periplasmic segment spans residues 34–52; sequence TTERFNWLEGAPAAEYYSS.

This sequence belongs to the antenna complex alpha subunit family. The core complex is formed by different alpha and beta chains, binding bacteriochlorophyll molecules, and arranged most probably in tetrameric structures disposed around the reaction center. The non-pigmented gamma chains may constitute additional components.

It localises to the cell inner membrane. Its function is as follows. Antenna complexes are light-harvesting systems, which transfer the excitation energy to the reaction centers. In Halorhodospira halochloris (Ectothiorhodospira halochloris), this protein is Light-harvesting protein B800/830/1020 alpha-1 chain.